The primary structure comprises 140 residues: Nucleoside diphosphate kinase (140 aa).

Lysine 11, phenylalanine 59, arginine 87, threonine 93, arginine 104, and asparagine 114 together coordinate ATP. The Pros-phosphohistidine intermediate role is filled by histidine 117.

It belongs to the NDK family. In terms of assembly, homotetramer. Requires Mg(2+) as cofactor.

It localises to the cytoplasm. It carries out the reaction a 2'-deoxyribonucleoside 5'-diphosphate + ATP = a 2'-deoxyribonucleoside 5'-triphosphate + ADP. It catalyses the reaction a ribonucleoside 5'-diphosphate + ATP = a ribonucleoside 5'-triphosphate + ADP. Major role in the synthesis of nucleoside triphosphates other than ATP. The ATP gamma phosphate is transferred to the NDP beta phosphate via a ping-pong mechanism, using a phosphorylated active-site intermediate. The sequence is that of Nucleoside diphosphate kinase from Francisella tularensis subsp. mediasiatica (strain FSC147).